Here is a 467-residue protein sequence, read N- to C-terminus: ATP synthase subunit beta (467 aa).

Gly153–Thr160 contacts ATP.

Belongs to the ATPase alpha/beta chains family. As to quaternary structure, F-type ATPases have 2 components, CF(1) - the catalytic core - and CF(0) - the membrane proton channel. CF(1) has five subunits: alpha(3), beta(3), gamma(1), delta(1), epsilon(1). CF(0) has three main subunits: a(1), b(2) and c(9-12). The alpha and beta chains form an alternating ring which encloses part of the gamma chain. CF(1) is attached to CF(0) by a central stalk formed by the gamma and epsilon chains, while a peripheral stalk is formed by the delta and b chains.

It localises to the cell membrane. It catalyses the reaction ATP + H2O + 4 H(+)(in) = ADP + phosphate + 5 H(+)(out). In terms of biological role, produces ATP from ADP in the presence of a proton gradient across the membrane. The catalytic sites are hosted primarily by the beta subunits. The polypeptide is ATP synthase subunit beta (Lactiplantibacillus plantarum (strain ATCC BAA-793 / NCIMB 8826 / WCFS1) (Lactobacillus plantarum)).